The primary structure comprises 239 residues: 7-cyano-7-deazaguanine synthase (239 aa).

Residue 13 to 23 (FSGGQDSTTCL) participates in ATP binding. The Zn(2+) site is built by cysteine 192, cysteine 201, cysteine 204, and cysteine 207.

The protein belongs to the QueC family. Requires Zn(2+) as cofactor.

It catalyses the reaction 7-carboxy-7-deazaguanine + NH4(+) + ATP = 7-cyano-7-deazaguanine + ADP + phosphate + H2O + H(+). The protein operates within purine metabolism; 7-cyano-7-deazaguanine biosynthesis. Its function is as follows. Catalyzes the ATP-dependent conversion of 7-carboxy-7-deazaguanine (CDG) to 7-cyano-7-deazaguanine (preQ(0)). The sequence is that of 7-cyano-7-deazaguanine synthase from Shewanella sp. (strain MR-4).